Reading from the N-terminus, the 173-residue chain is Putative metal-dependent hydrolase BCE_2729 (173 aa).

The Zn(2+) site is built by His65, His156, and His160.

It belongs to the metal hydrolase YfiT family. In terms of assembly, homodimer. The cofactor is Zn(2+).

Its subcellular location is the cytoplasm. Functionally, possible metal-dependent hydrolase. The protein is Putative metal-dependent hydrolase BCE_2729 of Bacillus cereus (strain ATCC 10987 / NRS 248).